The primary structure comprises 319 residues: Acetyl esterase (319 aa).

The Involved in the stabilization of the negatively charged intermediate by the formation of the oxyanion hole signature appears at 91–93 (HGG). Residues serine 165, aspartate 262, and histidine 292 contribute to the active site.

This sequence belongs to the 'GDXG' lipolytic enzyme family. As to quaternary structure, homodimer. Interacts with MalT and MelA.

The protein localises to the cytoplasm. Its function is as follows. Displays esterase activity towards short chain fatty esters (acyl chain length of up to 8 carbons). Able to hydrolyze triacetylglycerol (triacetin) and tributyrylglycerol (tributyrin), but not trioleylglycerol (triolein) or cholesterol oleate. Negatively regulates MalT activity by antagonizing maltotriose binding. Inhibits MelA galactosidase activity. This chain is Acetyl esterase, found in Escherichia coli O157:H7.